A 206-amino-acid polypeptide reads, in one-letter code: Uridine kinase (206 aa).

ATP is bound at residue 9-16 (GGSGSGKT).

This sequence belongs to the uridine kinase family.

The protein localises to the cytoplasm. The catalysed reaction is uridine + ATP = UMP + ADP + H(+). The enzyme catalyses cytidine + ATP = CMP + ADP + H(+). It participates in pyrimidine metabolism; CTP biosynthesis via salvage pathway; CTP from cytidine: step 1/3. It functions in the pathway pyrimidine metabolism; UMP biosynthesis via salvage pathway; UMP from uridine: step 1/1. This chain is Uridine kinase, found in Borrelia turicatae (strain 91E135).